The sequence spans 348 residues: Protein RecA (348 aa).

ATP is bound at residue 64–71 (GPESSGKT). Residues 326 to 335 (EIDGTNKEPL) are compositionally biased toward basic and acidic residues. The disordered stretch occupies residues 326–348 (EIDGTNKEPLDENEETLSLLDDE). Residues 336-348 (DENEETLSLLDDE) are compositionally biased toward acidic residues.

Belongs to the RecA family.

It localises to the cytoplasm. Its function is as follows. Can catalyze the hydrolysis of ATP in the presence of single-stranded DNA, the ATP-dependent uptake of single-stranded DNA by duplex DNA, and the ATP-dependent hybridization of homologous single-stranded DNAs. It interacts with LexA causing its activation and leading to its autocatalytic cleavage. The polypeptide is Protein RecA (Listeria innocua serovar 6a (strain ATCC BAA-680 / CLIP 11262)).